Consider the following 213-residue polypeptide: Adenylate kinase (213 aa).

10–15 (GSGKGT) contributes to the ATP binding site. Residues 30–59 (SVGDLLRNIISSSSELGKKIKGTVESGNLI) form an NMP region. Residues Arg-36, 57–59 (NLI), 83–86 (GFPR), and Gln-90 contribute to the AMP site. The tract at residues 125–160 (NRLACLDCKNIYSVSSFKSTTCAKCKSTRLEKRIDD) is LID. Residue Arg-126 coordinates ATP. Zn(2+)-binding residues include Cys-129 and Cys-132. 135–136 (IY) is a binding site for ATP. Cys-146 and Cys-149 together coordinate Zn(2+). AMP contacts are provided by Arg-157 and Arg-169. Position 195 (Leu-195) interacts with ATP.

This sequence belongs to the adenylate kinase family. In terms of assembly, monomer.

The protein resides in the cytoplasm. The enzyme catalyses AMP + ATP = 2 ADP. Its pathway is purine metabolism; AMP biosynthesis via salvage pathway; AMP from ADP: step 1/1. Functionally, catalyzes the reversible transfer of the terminal phosphate group between ATP and AMP. Plays an important role in cellular energy homeostasis and in adenine nucleotide metabolism. The protein is Adenylate kinase of Wolbachia pipientis wMel.